The chain runs to 320 residues: Ferrochelatase (320 aa).

2 residues coordinate Fe cation: His-194 and Glu-275.

The protein belongs to the ferrochelatase family. As to quaternary structure, monomer.

Its subcellular location is the cytoplasm. It carries out the reaction heme b + 2 H(+) = protoporphyrin IX + Fe(2+). The protein operates within porphyrin-containing compound metabolism; protoheme biosynthesis; protoheme from protoporphyrin-IX: step 1/1. Functionally, catalyzes the ferrous insertion into protoporphyrin IX. The protein is Ferrochelatase of Escherichia coli O127:H6 (strain E2348/69 / EPEC).